The sequence spans 193 residues: Dirigent protein (193 aa).

An N-terminal signal peptide occupies residues 1–29; sequence MGGEKAFSFIFLLFLCFFLANLSASSAHP. An intrachain disulfide couples Cys40 to Cys192. N-linked (GlcNAc...) asparagine glycans are attached at residues Asn59 and Asn129.

This sequence belongs to the plant dirigent protein family. Homodimer. In terms of tissue distribution, expressed in rhizomes, stems, and leaves.

It localises to the secreted. The protein localises to the extracellular space. The protein resides in the apoplast. It participates in aromatic compound metabolism; phenylpropanoid biosynthesis. Functionally, dirigent proteins impart stereoselectivity on the phenoxy radical-coupling reaction, yielding optically active lignans from two molecules of coniferyl alcohol in the biosynthesis of lignans, flavonolignans, and alkaloids and thus plays a central role in plant secondary metabolism. Also involved in the biosynthesis of etoposide, a chemotherapeutic compound of the topoisomerase inhibitor family. In Sinopodophyllum hexandrum (Himalayan may apple), this protein is Dirigent protein.